The following is a 484-amino-acid chain: Auxin transporter-like protein 2 (484 aa).

Over 1-59 the chain is Cytoplasmic; the sequence is MLPQKQGEEAIVSSFNETDQQEGVVGREEEVEDHSFSVKNFLWHGGSVWDAWFSCASNQ. The helical transmembrane segment at 60 to 77 threads the bilayer; sequence VAQVLLTLPYSFSQLGML. At 78–79 the chain is on the extracellular side; the sequence is SG. Residues 80 to 100 traverse the membrane as a helical segment; sequence ILLQVFYGILGSWTAYLISVL. Topologically, residues 101 to 135 are cytoplasmic; the sequence is YVEYRSRKEKENVNFKNHVIQWFEVLDGLLGPYWK. A helical transmembrane segment spans residues 136-156; the sequence is ALGLAFNCTFLLFGSVIQLIA. The Extracellular segment spans residues 157 to 172; it reads CASNIYYINDNLDKRT. Residues 173 to 193 form a helical membrane-spanning segment; it reads WTYIFGACCATTVFIPSFHNY. Residues 194 to 196 are Cytoplasmic-facing; sequence RIW. Residues 197–217 traverse the membrane as a helical segment; the sequence is SFLGLGMTTYTAWYLTIASIV. Over 218 to 232 the chain is Extracellular; it reads HGQAENVTHTGPKKL. The N-linked (GlcNAc...) asparagine glycan is linked to Asn-223. The helical transmembrane segment at 233-253 threads the bilayer; that stretch reads VLYFTGATNILYTFGGHAVTV. The Cytoplasmic segment spans residues 254 to 266; sequence EIMHAMWKPQKFK. Residues 267–287 form a helical membrane-spanning segment; sequence YIYLMATLYVFTLTIPSATAV. Residues 288-314 lie on the Extracellular side of the membrane; it reads YWAFGDELLNHSNAFSLLPKNGWRDGA. A glycan (N-linked (GlcNAc...) asparagine) is linked at Asn-297. Residues 315-335 form a helical membrane-spanning segment; it reads VILMLIHQFITFGFACTPLYF. Residues 336–356 are Cytoplasmic-facing; it reads VWEKVIGMHDTRSICLRALAR. Residues 357 to 377 form a helical membrane-spanning segment; that stretch reads LPVVIPIWFLAIIFPFFGPIN. Position 378 (Ser-378) is a topological domain, extracellular. Residues 379-399 form a helical membrane-spanning segment; that stretch reads AVGALLVSFTVYIIPSAAHML. The Cytoplasmic portion of the chain corresponds to 400-425; that stretch reads TYRKASARKNAAEKPPFFMPSWTAMY. A helical membrane pass occupies residues 426-446; that stretch reads IFNAFIVIWVLVVGFGFGGWA. The Extracellular segment spans residues 447–484; sequence SMTNFIRQIDTFGLFAKCYQCKPPPVMAAAPPPHALHH.

This sequence belongs to the amino acid/polyamine transporter 2 family. Amino acid/auxin permease (AAAP) (TC 2.A.18.1) subfamily. In terms of tissue distribution, shoots and roots of nodulating plants. Higher levels in roots, flowers and stems, lower in nodules, leaves, petioles and shoot apices.

The protein localises to the cell membrane. Carrier protein involved in proton-driven auxin influx. Mediates the formation of auxin gradient from developing leaves (site of auxin biosynthesis) to tips by contributing to the loading of auxin in vascular tissues and facilitating acropetal (base to tip) auxin transport within inner tissues of the root apex, and basipetal (tip to base) auxin transport within outer tissues of the root apex. May be involved in lateral roots and nodules formation. The sequence is that of Auxin transporter-like protein 2 (LAX2) from Medicago truncatula (Barrel medic).